We begin with the raw amino-acid sequence, 520 residues long: Glutamate--cysteine ligase (520 aa).

Belongs to the glutamate--cysteine ligase type 1 family. Type 1 subfamily.

It carries out the reaction L-cysteine + L-glutamate + ATP = gamma-L-glutamyl-L-cysteine + ADP + phosphate + H(+). Its pathway is sulfur metabolism; glutathione biosynthesis; glutathione from L-cysteine and L-glutamate: step 1/2. The protein is Glutamate--cysteine ligase of Serratia proteamaculans (strain 568).